The following is a 386-amino-acid chain: Succinate--CoA ligase [ADP-forming] subunit beta (386 aa).

ATP-binding positions include Lys-46, 53 to 55, Glu-99, Ala-102, and Glu-107; that span reads GRG. Mg(2+) is bound by residues Asn-199 and Asp-213. Substrate is bound by residues Asn-264 and 321–323; that span reads GIV.

This sequence belongs to the succinate/malate CoA ligase beta subunit family. Heterotetramer of two alpha and two beta subunits. Requires Mg(2+) as cofactor.

It catalyses the reaction succinate + ATP + CoA = succinyl-CoA + ADP + phosphate. The catalysed reaction is GTP + succinate + CoA = succinyl-CoA + GDP + phosphate. The protein operates within carbohydrate metabolism; tricarboxylic acid cycle; succinate from succinyl-CoA (ligase route): step 1/1. In terms of biological role, succinyl-CoA synthetase functions in the citric acid cycle (TCA), coupling the hydrolysis of succinyl-CoA to the synthesis of either ATP or GTP and thus represents the only step of substrate-level phosphorylation in the TCA. The beta subunit provides nucleotide specificity of the enzyme and binds the substrate succinate, while the binding sites for coenzyme A and phosphate are found in the alpha subunit. The chain is Succinate--CoA ligase [ADP-forming] subunit beta from Actinobacillus succinogenes (strain ATCC 55618 / DSM 22257 / CCUG 43843 / 130Z).